The primary structure comprises 340 residues: Phosphoribosylformylglycinamidine cyclo-ligase (340 aa).

The protein belongs to the AIR synthase family.

Its subcellular location is the cytoplasm. The enzyme catalyses 2-formamido-N(1)-(5-O-phospho-beta-D-ribosyl)acetamidine + ATP = 5-amino-1-(5-phospho-beta-D-ribosyl)imidazole + ADP + phosphate + H(+). It participates in purine metabolism; IMP biosynthesis via de novo pathway; 5-amino-1-(5-phospho-D-ribosyl)imidazole from N(2)-formyl-N(1)-(5-phospho-D-ribosyl)glycinamide: step 2/2. The polypeptide is Phosphoribosylformylglycinamidine cyclo-ligase (Streptococcus gordonii (strain Challis / ATCC 35105 / BCRC 15272 / CH1 / DL1 / V288)).